The chain runs to 146 residues: Putative type II restriction enzyme MjaORF1200P (146 aa).

To A.pernix APE2001.

The catalysed reaction is Endonucleolytic cleavage of DNA to give specific double-stranded fragments with terminal 5'-phosphates.. A putative type II restriction enzyme, its methylase would be M.MjaORF1200P (AC Q58600). The chain is Putative type II restriction enzyme MjaORF1200P from Methanocaldococcus jannaschii (strain ATCC 43067 / DSM 2661 / JAL-1 / JCM 10045 / NBRC 100440) (Methanococcus jannaschii).